Reading from the N-terminus, the 70-residue chain is Protein SlyX homolog (70 aa).

It belongs to the SlyX family.

The chain is Protein SlyX homolog from Agrobacterium fabrum (strain C58 / ATCC 33970) (Agrobacterium tumefaciens (strain C58)).